We begin with the raw amino-acid sequence, 460 residues long: NADH-ubiquinone oxidoreductase chain 4 (460 aa).

13 helical membrane-spanning segments follow: residues 20 to 42 (AKWL…LSWL), 61 to 81 (PLST…ILAS), 94 to 113 (RAYI…AFGA), 117 to 139 (IMFY…RWGN), 148 to 168 (TYFL…LLLM), 195 to 215 (LWWA…GVHL), 225 to 245 (PIAG…YGMM), 258 to 278 (LAYP…SICL), 285 to 304 (SLIA…GILI), 308 to 330 (WGFT…LFCL), 351 to 371 (MILP…LALP), 394 to 414 (LILT…LFLM), and 436 to 456 (LLII…ELMW).

Belongs to the complex I subunit 4 family.

It localises to the mitochondrion membrane. The catalysed reaction is a ubiquinone + NADH + 5 H(+)(in) = a ubiquinol + NAD(+) + 4 H(+)(out). Functionally, core subunit of the mitochondrial membrane respiratory chain NADH dehydrogenase (Complex I) that is believed to belong to the minimal assembly required for catalysis. Complex I functions in the transfer of electrons from NADH to the respiratory chain. The immediate electron acceptor for the enzyme is believed to be ubiquinone. This Oncorhynchus mykiss (Rainbow trout) protein is NADH-ubiquinone oxidoreductase chain 4 (MT-ND4).